The following is a 200-amino-acid chain: Large ribosomal subunit protein uL4 (200 aa).

Residues 42 to 65 (TRAQKTRSEVSGGGAKPWRQKGTG) form a disordered region.

It belongs to the universal ribosomal protein uL4 family. In terms of assembly, part of the 50S ribosomal subunit.

One of the primary rRNA binding proteins, this protein initially binds near the 5'-end of the 23S rRNA. It is important during the early stages of 50S assembly. It makes multiple contacts with different domains of the 23S rRNA in the assembled 50S subunit and ribosome. Functionally, forms part of the polypeptide exit tunnel. In Aliivibrio fischeri (strain MJ11) (Vibrio fischeri), this protein is Large ribosomal subunit protein uL4.